Reading from the N-terminus, the 33-residue chain is Defensin-1 (33 aa).

3 cysteine pairs are disulfide-bonded: cysteine 4–cysteine 32, cysteine 6–cysteine 21, and cysteine 11–cysteine 31.

This sequence belongs to the alpha-defensin family.

The protein localises to the secreted. Its function is as follows. Has antibacterial activity against the Gram-negative bacterium E.coli and the Gram-positive bacteria L.monocytogenes and S.aureus. Has antifungal activity against C.albicans. This chain is Defensin-1, found in Papio hamadryas (Hamadryas baboon).